The chain runs to 355 residues: Guanine nucleotide-binding protein G(i) subunit alpha-2 (355 aa).

The N-myristoyl glycine moiety is linked to residue Gly-2. Cys-3 is lipidated: S-palmitoyl cysteine. The region spanning 32-355 (REVKLLLLGA…KNNLKDCGLF (324 aa)) is the G-alpha domain. Residues 35 to 48 (KLLLLGAGESGKST) form a G1 motif region. GTP is bound by residues 40–47 (GAGESGKS), 176–182 (LRTRVKT), 201–205 (DVGGQ), 270–273 (NKKD), and Ala-327. Mg(2+)-binding residues include Ser-47 and Thr-182. The tract at residues 174–182 (DVLRTRVKT) is G2 motif. Residues 197–206 (FKMFDVGGQR) are G3 motif. Residues 266–273 (ILFLNKKD) are G4 motif. Residues 325–330 (TCATDT) form a G5 motif region.

Belongs to the G-alpha family. G(i/o/t/z) subfamily. As to quaternary structure, g proteins are composed of 3 units; alpha, beta and gamma. The alpha chain contains the guanine nucleotide binding site.

It is found in the cytoplasm. The protein resides in the cytoskeleton. It localises to the microtubule organizing center. The protein localises to the centrosome. Its subcellular location is the cell membrane. Functionally, guanine nucleotide-binding proteins (G proteins) are involved as modulators or transducers in various transmembrane signaling systems. The G(i) proteins are involved in hormonal regulation of adenylate cyclase: they inhibit the cyclase in response to beta-adrenergic stimuli. May play a role in cell division. The chain is Guanine nucleotide-binding protein G(i) subunit alpha-2 (gnai2) from Oryzias latipes (Japanese rice fish).